A 236-amino-acid polypeptide reads, in one-letter code: uncharacterized protein (236 aa).

Positions 1-17 are enriched in polar residues; it reads MSVSSLLQPNTYNINSK. A disordered region spans residues 1 to 94; that stretch reads MSVSSLLQPN…GVKGTTGGTI (94 aa). The span at 18 to 35 shows a compositional bias: low complexity; that stretch reads SQSLSNTPSNPTSQTNTL. Positions 58 to 91 constitute a Collagen-like domain; it reads GPSGPKGDKGDPGSKGETGSQGIKGDPGVKGTTG.

Belongs to the sputnik virus V6 family.

This is an uncharacterized protein from Sputnik virophage.